The chain runs to 124 residues: Large ribosomal subunit protein bL12 (124 aa).

Belongs to the bacterial ribosomal protein bL12 family. Homodimer. Part of the ribosomal stalk of the 50S ribosomal subunit. Forms a multimeric L10(L12)X complex, where L10 forms an elongated spine to which 2 to 4 L12 dimers bind in a sequential fashion. Binds GTP-bound translation factors.

Forms part of the ribosomal stalk which helps the ribosome interact with GTP-bound translation factors. Is thus essential for accurate translation. The protein is Large ribosomal subunit protein bL12 of Herminiimonas arsenicoxydans.